The primary structure comprises 173 residues: Crossover junction endodeoxyribonuclease RuvC (173 aa).

Active-site residues include D8, E67, and D139. Mg(2+) contacts are provided by D8, E67, and D139.

It belongs to the RuvC family. In terms of assembly, homodimer which binds Holliday junction (HJ) DNA. The HJ becomes 2-fold symmetrical on binding to RuvC with unstacked arms; it has a different conformation from HJ DNA in complex with RuvA. In the full resolvosome a probable DNA-RuvA(4)-RuvB(12)-RuvC(2) complex forms which resolves the HJ. Mg(2+) is required as a cofactor.

It localises to the cytoplasm. It catalyses the reaction Endonucleolytic cleavage at a junction such as a reciprocal single-stranded crossover between two homologous DNA duplexes (Holliday junction).. Its function is as follows. The RuvA-RuvB-RuvC complex processes Holliday junction (HJ) DNA during genetic recombination and DNA repair. Endonuclease that resolves HJ intermediates. Cleaves cruciform DNA by making single-stranded nicks across the HJ at symmetrical positions within the homologous arms, yielding a 5'-phosphate and a 3'-hydroxyl group; requires a central core of homology in the junction. The consensus cleavage sequence is 5'-(A/T)TT(C/G)-3'. Cleavage occurs on the 3'-side of the TT dinucleotide at the point of strand exchange. HJ branch migration catalyzed by RuvA-RuvB allows RuvC to scan DNA until it finds its consensus sequence, where it cleaves and resolves the cruciform DNA. This is Crossover junction endodeoxyribonuclease RuvC from Aeromonas hydrophila subsp. hydrophila (strain ATCC 7966 / DSM 30187 / BCRC 13018 / CCUG 14551 / JCM 1027 / KCTC 2358 / NCIMB 9240 / NCTC 8049).